The chain runs to 107 residues: MCSSLWHLYLIRTASGMLYTGITTDVQRRLDQHQRGGGAKSLRGKGPLTLVFQSPAGDRSRVLRWEYRVKQLSRAQKEHFVALQEQALPHFGLEHSALAAGKSAPAR.

A GIY-YIG domain is found at 4–79 (SLWHLYLIRT…KQLSRAQKEH (76 aa)).

The protein belongs to the UPF0213 family.

The polypeptide is UPF0213 protein SG0387 (Sodalis glossinidius (strain morsitans)).